The sequence spans 753 residues: Putative cyclic nucleotide-gated ion channel 8 (753 aa).

The Cytoplasmic portion of the chain corresponds to M1–M111. Residues F112–V132 form a helical membrane-spanning segment. Topologically, residues D133–L145 are extracellular. The helical transmembrane segment at A146–L166 threads the bilayer. At Q167–R199 the chain is on the cytoplasmic side. A helical membrane pass occupies residues Y200 to L220. Residues H221–Q233 lie on the Extracellular side of the membrane. A helical membrane pass occupies residues A234 to T254. The Cytoplasmic portion of the chain corresponds to S255 to Y274. A helical membrane pass occupies residues Y275–V295. Residues E296 to G402 lie on the Extracellular side of the membrane. Residues E403–G423 traverse the membrane as a helical segment. Topologically, residues N424–N753 are cytoplasmic. A nucleoside 3',5'-cyclic phosphate contacts are provided by residues L508 to F638 and E579. The calmodulin-binding stretch occupies residues F624–Y639. The IQ domain occupies R644–E673. Residues K731–N753 are disordered. Residues P742–N753 are compositionally biased toward acidic residues.

It belongs to the cyclic nucleotide-gated cation channel (TC 1.A.1.5) family. As to quaternary structure, homotetramer or heterotetramer.

It localises to the cell membrane. Its function is as follows. Putative cyclic nucleotide-gated ion channel. The sequence is that of Putative cyclic nucleotide-gated ion channel 8 (CNGC8) from Arabidopsis thaliana (Mouse-ear cress).